The chain runs to 459 residues: tRNA modification GTPase MnmE (459 aa).

Arg21, Glu84, and Arg123 together coordinate (6S)-5-formyl-5,6,7,8-tetrahydrofolate. The TrmE-type G domain maps to 219–378 (GVTVALAGAV…LLVLLYNFVL (160 aa)). GTP is bound by residues 229 to 234 (NAGKSS), 248 to 254 (TEHPGTT), and 273 to 276 (DTAG). Mg(2+) is bound by residues Ser233 and Thr254. Lys459 is a (6S)-5-formyl-5,6,7,8-tetrahydrofolate binding site.

Belongs to the TRAFAC class TrmE-Era-EngA-EngB-Septin-like GTPase superfamily. TrmE GTPase family. In terms of assembly, homodimer. Heterotetramer of two MnmE and two MnmG subunits. K(+) serves as cofactor.

The protein localises to the cytoplasm. Exhibits a very high intrinsic GTPase hydrolysis rate. Involved in the addition of a carboxymethylaminomethyl (cmnm) group at the wobble position (U34) of certain tRNAs, forming tRNA-cmnm(5)s(2)U34. This chain is tRNA modification GTPase MnmE, found in Lawsonia intracellularis (strain PHE/MN1-00).